The primary structure comprises 1188 residues: Spermatogenesis-associated protein 31C1 (1188 aa).

The helical transmembrane segment at P23–L43 threads the bilayer. Disordered stretches follow at residues P57–S92, L121–P249, P483–T510, T530–S567, M733–P813, N934–S1013, Q1121–L1143, and L1155–H1188. 2 stretches are compositionally biased toward basic residues: residues P59 to S68 and R80 to S92. The span at V138–M154 shows a compositional bias: basic and acidic residues. Over residues S191–R207 the composition is skewed to low complexity. Positions P210 to L241 are enriched in pro residues. A compositionally biased stretch (polar residues) spans W495–T510. 2 stretches are compositionally biased toward polar residues: residues L783–A800 and P943–P954. Basic and acidic residues predominate over residues H960 to M976. The span at Q1121–R1130 shows a compositional bias: polar residues.

Belongs to the SPATA31 family.

It is found in the membrane. In terms of biological role, may play a role in spermatogenesis. The polypeptide is Spermatogenesis-associated protein 31C1 (SPATA31C1) (Homo sapiens (Human)).